The following is a 91-amino-acid chain: Large ribosomal subunit protein bL31B (91 aa).

The protein belongs to the bacterial ribosomal protein bL31 family. Type B subfamily. In terms of assembly, part of the 50S ribosomal subunit.

This chain is Large ribosomal subunit protein bL31B, found in Neisseria meningitidis serogroup C (strain 053442).